The following is a 957-amino-acid chain: Glycine dehydrogenase (decarboxylating) (957 aa).

Lysine 708 is subject to N6-(pyridoxal phosphate)lysine.

Belongs to the GcvP family. In terms of assembly, the glycine cleavage system is composed of four proteins: P, T, L and H. Pyridoxal 5'-phosphate is required as a cofactor.

The catalysed reaction is N(6)-[(R)-lipoyl]-L-lysyl-[glycine-cleavage complex H protein] + glycine + H(+) = N(6)-[(R)-S(8)-aminomethyldihydrolipoyl]-L-lysyl-[glycine-cleavage complex H protein] + CO2. The glycine cleavage system catalyzes the degradation of glycine. The P protein binds the alpha-amino group of glycine through its pyridoxal phosphate cofactor; CO(2) is released and the remaining methylamine moiety is then transferred to the lipoamide cofactor of the H protein. The protein is Glycine dehydrogenase (decarboxylating) of Klebsiella pneumoniae subsp. pneumoniae (strain ATCC 700721 / MGH 78578).